Reading from the N-terminus, the 294-residue chain is 4-hydroxy-tetrahydrodipicolinate synthase (294 aa).

Threonine 47 provides a ligand contact to pyruvate. Tyrosine 135 serves as the catalytic Proton donor/acceptor. The active-site Schiff-base intermediate with substrate is the lysine 163. Isoleucine 206 lines the pyruvate pocket.

Belongs to the DapA family. As to quaternary structure, homodimer.

It is found in the cytoplasm. The catalysed reaction is L-aspartate 4-semialdehyde + pyruvate = (2S,4S)-4-hydroxy-2,3,4,5-tetrahydrodipicolinate + H2O + H(+). Its pathway is amino-acid biosynthesis; L-lysine biosynthesis via DAP pathway; (S)-tetrahydrodipicolinate from L-aspartate: step 3/4. Functionally, catalyzes the condensation of (S)-aspartate-beta-semialdehyde [(S)-ASA] and pyruvate to 4-hydroxy-tetrahydrodipicolinate (HTPA). This is 4-hydroxy-tetrahydrodipicolinate synthase from Staphylococcus haemolyticus (strain JCSC1435).